A 129-amino-acid polypeptide reads, in one-letter code: MSEVAETWVDTWMAKLVNYDYKHFIRLVIIVGGYLLLRNIASRELAKKQLAAQVEKDKRDKEEKRSKDLIDKPDDAATAETTSFGWGKKTRRRVKRQQELFENALEEAKRRNQGLDPDSDADIEELLEE.

At Ser2 the chain carries N-acetylserine. A helical transmembrane segment spans residues 23 to 42 (HFIRLVIIVGGYLLLRNIAS). The stretch at 43-116 (RELAKKQLAA…EAKRRNQGLD (74 aa)) forms a coiled coil. Disordered regions lie at residues 53-92 (QVEKDKRDKEEKRSKDLIDKPDDAATAETTSFGWGKKTRR) and 106-129 (EEAKRRNQGLDPDSDADIEELLEE). The span at 54-75 (VEKDKRDKEEKRSKDLIDKPDD) shows a compositional bias: basic and acidic residues. The span at 117–129 (PDSDADIEELLEE) shows a compositional bias: acidic residues. Residue Ser119 is modified to Phosphoserine.

The protein belongs to the PGA2 family.

It is found in the endoplasmic reticulum membrane. It localises to the nucleus membrane. Functionally, involved in the processing and trafficking of GAS1 and PHO8 glycosylated proteins. The sequence is that of Processing of GAS1 and ALP protein 2 (PGA2) from Saccharomyces cerevisiae (strain ATCC 204508 / S288c) (Baker's yeast).